The following is a 346-amino-acid chain: UPF0065 protein in the TAR-I ttuE-ttuC' intergenic region (346 aa).

Residues 1–46 (MQASMLDSQWRLTIFSPRRKVKVSQMNSRFIAVLLTATILPWVAQA) form the signal peptide.

It belongs to the UPF0065 (bug) family.

The protein localises to the periplasm. This chain is UPF0065 protein in the TAR-I ttuE-ttuC' intergenic region, found in Agrobacterium vitis (Rhizobium vitis).